The sequence spans 76 residues: UPF0291 protein GWCH70_1239 (76 aa).

Positions 54-76 are disordered; sequence VIDPNGNDVTPKKLKESQKSRLH. Residues 63–76 show a composition bias toward basic and acidic residues; sequence TPKKLKESQKSRLH.

This sequence belongs to the UPF0291 family.

The protein localises to the cytoplasm. The sequence is that of UPF0291 protein GWCH70_1239 from Geobacillus sp. (strain WCH70).